Consider the following 229-residue polypeptide: Interleukin-27 subunit beta (229 aa).

The signal sequence occupies residues 1–20 (MTPQLLLALVLWASCPPCSG). 2 consecutive Fibronectin type-III domains span residues 24–130 (PPAA…IKPD) and 131–227 (PPEG…TMSL). Residues Asn-55 and Asn-105 are each glycosylated (N-linked (GlcNAc...) asparagine).

Belongs to the type I cytokine receptor family. Type 3 subfamily. In terms of assembly, heterodimer with IL27/IL27A; not disulfide-linked. This heterodimer is known as interleukin IL-27. Heterodimer with IL12A; not disulfide-linked. This heterodimer is known as interleukin IL-35. Interacts with SQSTM1.

The protein resides in the secreted. Its function is as follows. Associates with IL27 to form the IL-27 interleukin, a heterodimeric cytokine which functions in innate immunity. IL-27 has pro- and anti-inflammatory properties, that can regulate T-helper cell development, suppress T-cell proliferation, stimulate cytotoxic T-cell activity, induce isotype switching in B-cells, and that has diverse effects on innate immune cells. Among its target cells are CD4 T-helper cells which can differentiate in type 1 effector cells (TH1), type 2 effector cells (TH2) and IL17 producing helper T-cells (TH17). It drives rapid clonal expansion of naive but not memory CD4 T-cells. It also strongly synergizes with IL-12 to trigger interferon-gamma/IFN-gamma production of naive CD4 T-cells, binds to the cytokine receptor WSX-1/TCCR. Another important role of IL-27 is its antitumor activity as well as its antiangiogenic activity with activation of production of antiangiogenic chemokines. This is Interleukin-27 subunit beta (EBI3) from Homo sapiens (Human).